The primary structure comprises 306 residues: Polyisoprenyl-teichoic acid--peptidoglycan teichoic acid transferase TagU (306 aa).

Residues M1–T11 are Cytoplasmic-facing. The helical; Signal-anchor for type II membrane protein transmembrane segment at L12–Y32 threads the bilayer. Residues Y33–K306 are Extracellular-facing.

It belongs to the LytR/CpsA/Psr (LCP) family. In terms of assembly, interacts with MreB. Interacts with FloT.

It is found in the cell membrane. It localises to the membrane raft. It functions in the pathway cell wall biogenesis. In terms of biological role, may catalyze the final step in cell wall teichoic acid biosynthesis, the transfer of the anionic cell wall polymers (APs) from their lipid-linked precursor to the cell wall peptidoglycan (PG). This Bacillus subtilis (strain 168) protein is Polyisoprenyl-teichoic acid--peptidoglycan teichoic acid transferase TagU.